Reading from the N-terminus, the 55-residue chain is UPF0434 protein BPEN_388 (55 aa).

It belongs to the UPF0434 family.

This Blochmanniella pennsylvanica (strain BPEN) protein is UPF0434 protein BPEN_388.